We begin with the raw amino-acid sequence, 444 residues long: MKRIVVLGAGESGAGAAVLAKVKGFDTFVSDMSAIKDKYKTLLDGHGIAWEEGRHTEEQILSADEVVKSPGIPNDAPLILRLREQGTPIISEIEFAGRYTDAKMICITGSNGKTTTTSLIYHIFKSAGLNVGLAGNIGKSLALQVAEEKHDYYVIELSSFQLDNMYNFRADIAVLMNITPDHLDRYDHCMQNYINAKFRITQNQTSEDAFIFWNDDPIIKRELDKHGIRAHLYPFSAIKEEGSIAYVEDHEVVITEPIAFNMEQEQLALTGQHNLYNSLAAGISANLAGITKEDIRKALSDFQGVEHRLEKVARVRGIDFINDSKATNVNSCWYALQSMTTKTVLILGGKDKGNDYTEIEELVREKCSALVYLGLHNEKLHEFFDRLGLPVAEVQTGMKDAVEAAYKLAKKGETVLLSPCCASFDLFKSYEDRGEQFKKYVREL.

Residue 109 to 115 (GSNGKTT) coordinates ATP.

This sequence belongs to the MurCDEF family.

The protein resides in the cytoplasm. It catalyses the reaction UDP-N-acetyl-alpha-D-muramoyl-L-alanine + D-glutamate + ATP = UDP-N-acetyl-alpha-D-muramoyl-L-alanyl-D-glutamate + ADP + phosphate + H(+). Its pathway is cell wall biogenesis; peptidoglycan biosynthesis. Functionally, cell wall formation. Catalyzes the addition of glutamate to the nucleotide precursor UDP-N-acetylmuramoyl-L-alanine (UMA). The polypeptide is UDP-N-acetylmuramoylalanine--D-glutamate ligase (Bacteroides fragilis (strain ATCC 25285 / DSM 2151 / CCUG 4856 / JCM 11019 / LMG 10263 / NCTC 9343 / Onslow / VPI 2553 / EN-2)).